A 144-amino-acid chain; its full sequence is Putative low molecular weight protein-tyrosine-phosphatase (144 aa).

The Nucleophile role is filled by Cys-9. Residue Arg-15 is part of the active site. Residue Asp-115 is the Proton donor of the active site.

It belongs to the low molecular weight phosphotyrosine protein phosphatase family.

It carries out the reaction O-phospho-L-tyrosyl-[protein] + H2O = L-tyrosyl-[protein] + phosphate. The chain is Putative low molecular weight protein-tyrosine-phosphatase from Klebsiella pneumoniae.